Reading from the N-terminus, the 461-residue chain is Cysteine--tRNA ligase (461 aa).

C28 lines the Zn(2+) pocket. The 'HIGH' region motif lies at 30-40 (ITVYDLCHIGH). C209, H234, and E238 together coordinate Zn(2+). Residues 266-270 (KMSKS) carry the 'KMSKS' region motif. K269 contacts ATP.

The protein belongs to the class-I aminoacyl-tRNA synthetase family. As to quaternary structure, monomer. Zn(2+) serves as cofactor.

It is found in the cytoplasm. The enzyme catalyses tRNA(Cys) + L-cysteine + ATP = L-cysteinyl-tRNA(Cys) + AMP + diphosphate. The sequence is that of Cysteine--tRNA ligase from Salmonella dublin (strain CT_02021853).